The sequence spans 223 residues: MTSSATSPTNGVDKNKNEEMVATPANCPYQLFNQEVVWNGKWIQTRQVGFKTHTGQVGVWQSVHRNTKPVEASADGVSIIARVRKQGKLYIVLVKQYRIPCGKLCLELPAGLIDAGETAQQAAIRELKEETGYVSGKVVMESKLCFLDPGLTDDSQCLVVVDVDGDAPENQNPVQVLDSTESIEVLLVEQSALMAYVTNLDSSSIVVESTLLAYAMGIQFATI.

A Nudix hydrolase domain is found at 72-213; the sequence is ASADGVSIIA…SIVVESTLLA (142 aa). The Nudix box signature appears at 111-132; sequence GLIDAGETAQQAAIRELKEETG. Glu-126 and Glu-130 together coordinate Mg(2+).

Belongs to the Nudix hydrolase family. Requires Mg(2+) as cofactor. The cofactor is Mn(2+).

Probably mediates the hydrolysis of some nucleoside diphosphate derivatives. This chain is Putative nudix hydrolase 2 (ndx-2), found in Caenorhabditis elegans.